Reading from the N-terminus, the 409-residue chain is Elongation factor 1-gamma (409 aa).

One can recognise a GST N-terminal domain in the interval 2–81 (SVGTVYGKIG…YLASLNKTRA (80 aa)). A GST C-terminal domain is found at 86–212 (TAEEKAKVLQ…EPLKFIDQPL (127 aa)). The segment covering 219-248 (NKEAAPAKKAEKKKDEKKKNAPKPQAERPA) has biased composition (basic and acidic residues). Residues 219–261 (NKEAAPAKKAEKKKDEKKKNAPKPQAERPAKPPKHPLASAPNG) are disordered. The region spanning 251-409 (PKHPLASAPN…REVADGKVCK (159 aa)) is the EF-1-gamma C-terminal domain.

In terms of assembly, EF-1 is composed of four subunits: alpha, beta, delta, and gamma.

In terms of biological role, probably plays a role in anchoring the complex to other cellular components. The chain is Elongation factor 1-gamma (tef3) from Schizosaccharomyces pombe (strain 972 / ATCC 24843) (Fission yeast).